We begin with the raw amino-acid sequence, 448 residues long: N-succinylarginine dihydrolase (448 aa).

Substrate contacts are provided by residues 19–28, asparagine 110, and 137–138; these read GGLSYGNVAS and HR. Glutamate 174 is a catalytic residue. Arginine 214 provides a ligand contact to substrate. Histidine 250 is an active-site residue. Substrate is bound by residues aspartate 252 and asparagine 365. Cysteine 371 serves as the catalytic Nucleophile.

Belongs to the succinylarginine dihydrolase family. In terms of assembly, homodimer.

The catalysed reaction is N(2)-succinyl-L-arginine + 2 H2O + 2 H(+) = N(2)-succinyl-L-ornithine + 2 NH4(+) + CO2. Its pathway is amino-acid degradation; L-arginine degradation via AST pathway; L-glutamate and succinate from L-arginine: step 2/5. In terms of biological role, catalyzes the hydrolysis of N(2)-succinylarginine into N(2)-succinylornithine, ammonia and CO(2). This Pseudomonas aeruginosa (strain UCBPP-PA14) protein is N-succinylarginine dihydrolase.